A 242-amino-acid chain; its full sequence is Placenta-expressed transcript 1 protein (242 aa).

Residues 1 to 26 (MAVLRSLLPQLGLFLCLALCFSPALS) form the signal peptide. 3 N-linked (GlcNAc...) asparagine glycosylation sites follow: N47, N56, and N66. S223 is lipidated: GPI-anchor amidated serine. Residues 224–242 (PLAGALHILLVFLISKLLF) constitute a propeptide, removed in mature form.

Post-translationally, N-glycosylated. In terms of processing, GPI-anchored. As to expression, present at high level in the dermal sheath cells near the bulge area of the hair follicle and in the differentiated sebocytes of the normal adult skin (at protein level).

The protein localises to the apical cell membrane. Functionally, modulates leading keratinocyte migration and cellular adhesion to matrix proteins during a wound-healing response and promotes wound repair. May play a role during trichilemmal differentiation of the hair follicle. This chain is Placenta-expressed transcript 1 protein (PLET1), found in Mesocricetus auratus (Golden hamster).